A 1401-amino-acid chain; its full sequence is DNA-directed RNA polymerase subunit beta'' (1401 aa).

The Zn(2+) site is built by cysteine 224, cysteine 295, cysteine 302, and cysteine 305.

The protein belongs to the RNA polymerase beta' chain family. RpoC2 subfamily. In terms of assembly, in plastids the minimal PEP RNA polymerase catalytic core is composed of four subunits: alpha, beta, beta', and beta''. When a (nuclear-encoded) sigma factor is associated with the core the holoenzyme is formed, which can initiate transcription. It depends on Zn(2+) as a cofactor.

The protein localises to the plastid. The protein resides in the chloroplast. It catalyses the reaction RNA(n) + a ribonucleoside 5'-triphosphate = RNA(n+1) + diphosphate. In terms of biological role, DNA-dependent RNA polymerase catalyzes the transcription of DNA into RNA using the four ribonucleoside triphosphates as substrates. The polypeptide is DNA-directed RNA polymerase subunit beta'' (Ipomoea purpurea (Common morning glory)).